The sequence spans 97 residues: MVQKAHSFRRKTRKKLRKHPRRRGLPPLTRFLQEFEVGQRVHIVIEPSYHKGMPDPRFHGRTGTVVGKRGDAYIVEVPDGNKVKTLFIHPVHLRPQK.

The segment covering 1–24 (MVQKAHSFRRKTRKKLRKHPRRRG) has biased composition (basic residues). A disordered region spans residues 1–25 (MVQKAHSFRRKTRKKLRKHPRRRGL).

This sequence belongs to the eukaryotic ribosomal protein eL21 family.

The chain is Large ribosomal subunit protein eL21 (rpl21e) from Pyrococcus abyssi (strain GE5 / Orsay).